The sequence spans 216 residues: Large ribosomal subunit protein uL3 (216 aa).

Residues 133–145 (GRATHGNSRSHNV) show a composition bias toward polar residues. The segment at 133 to 153 (GRATHGNSRSHNVPGSIGMAQ) is disordered. N5-methylglutamine is present on Gln-153.

The protein belongs to the universal ribosomal protein uL3 family. Part of the 50S ribosomal subunit. Forms a cluster with proteins L14 and L19. In terms of processing, methylated by PrmB.

In terms of biological role, one of the primary rRNA binding proteins, it binds directly near the 3'-end of the 23S rRNA, where it nucleates assembly of the 50S subunit. In Burkholderia cenocepacia (strain ATCC BAA-245 / DSM 16553 / LMG 16656 / NCTC 13227 / J2315 / CF5610) (Burkholderia cepacia (strain J2315)), this protein is Large ribosomal subunit protein uL3.